We begin with the raw amino-acid sequence, 550 residues long: Probable endochitinase (550 aa).

Residues 1 to 16 (MLHYLATILWLAVAHA) form the signal peptide. 2 N-linked (GlcNAc...) asparagine; by host glycosylation sites follow: asparagine 146 and asparagine 172. A GH18 domain is found at 147-547 (KTVAAYFVEW…NAMNERVRVK (401 aa)). The Proton donor role is filled by glutamate 304. N-linked (GlcNAc...) asparagine; by host glycosylation occurs at asparagine 344. Residues 547–550 (KDEL) carry the Prevents secretion from ER motif.

It belongs to the glycosyl hydrolase 18 family. Chitinase class II subfamily.

Its subcellular location is the host endoplasmic reticulum lumen. The enzyme catalyses Random endo-hydrolysis of N-acetyl-beta-D-glucosaminide (1-&gt;4)-beta-linkages in chitin and chitodextrins.. The protein is Probable endochitinase of Orgyia pseudotsugata (Douglas-fir tussock moth).